The chain runs to 809 residues: 3',5'-cyclic-AMP phosphodiesterase 4D (809 aa).

The tract at residues 1 to 107 (MEAEGSSAPA…SGATGRVRHR (107 aa)) is disordered. Phosphoserine occurs at positions 54, 59, and 63. A compositionally biased stretch (pro residues) spans 58-89 (PPPPPPSPQPQPQCPLQPPPPPPLPPPPPPPG). A compositionally biased stretch (low complexity) spans 90–102 (AARGRYASSGATG). Residues S142, S299, S301, S348, and S375 each carry the phosphoserine modification. The disordered stretch occupies residues 343-364 (EVEIPSPTQKEKEKKKRPMSQI). A PDEase domain is found at 386-715 (VKTEQEDVLA…EWYQSTIPQS (330 aa)). K387 is covalently cross-linked (Glycyl lysine isopeptide (Lys-Gly) (interchain with G-Cter in SUMO)). H462 functions as the Proton donor in the catalytic mechanism. 3',5'-cyclic AMP is bound at residue H462. H462 serves as a coordination point for AMP. H466, H502, D503, and D620 together coordinate Zn(2+). Residues D503, D620, N623, Q671, and F674 each coordinate AMP. D503 contributes to the Mg(2+) binding site. D503 contacts Mn(2+). Residues Q671 and F674 each coordinate 3',5'-cyclic AMP. Disordered stretches follow at residues 710 to 729 (STIP…GRQG) and 739 to 809 (TLEE…SPDT). A compositionally biased stretch (polar residues) spans 762–773 (CSDSKTLCTQDS). A compositionally biased stretch (acidic residues) spans 779-796 (PLDEQVEEEAVGEEEESQ).

This sequence belongs to the cyclic nucleotide phosphodiesterase family. PDE4 subfamily. In terms of assembly, homodimer for the long isoforms. Isoforms with truncated N-termini are monomeric. Isoform 3 is part of a ternary complex containing PRKAR2A, PRKAR2B and AKAP9. Interacts with PDE4DIP. Identified in a complex composed of RYR1, PDE4D, PKA, FKBP1A and protein phosphatase 1 (PP1). Isoform 5, isoform N3 and isoform 12 bind RACK1 via their unique N-terminus. Binds ARRB2. Interacts (via N-terminal region) with SHANK2 (via proline-rich region); the interaction is increased in a PKA-dependent manner. Zn(2+) is required as a cofactor. The cofactor is Mg(2+). Mn(2+) serves as cofactor. In terms of processing, long isoforms that share a conserved PKA phosphorylation site in the N-terminus are activated by PKA through phosphorylation. Isoform 3 and isoform 7 are activated by phosphorylation (in vitro), but not isoform 6. Isoform N3 and isoform 12 are phosphorylated on Ser-49, Ser-51, Ser-55 and Ser-59. Sumoylation of long isoforms by PIAS4 augments their activation by PKA phosphorylation and represses their inhibition by ERK phosphorylation. Expressed in colonic epithelial cells (at protein level). Widespread; most abundant in skeletal muscle. As to expression, detected in brain. In terms of tissue distribution, detected in brain, placenta, lung and kidney. Detected in heart and skeletal muscle.

Its subcellular location is the apical cell membrane. The protein resides in the cytoplasm. The protein localises to the membrane. It localises to the cytoskeleton. It is found in the microtubule organizing center. Its subcellular location is the centrosome. It carries out the reaction 3',5'-cyclic AMP + H2O = AMP + H(+). The protein operates within purine metabolism; 3',5'-cyclic AMP degradation; AMP from 3',5'-cyclic AMP: step 1/1. Its activity is regulated as follows. Inhibited by rolipram. Activated by phosphatidic acid. Functionally, hydrolyzes the second messenger cAMP, which is a key regulator of many important physiological processes. This is 3',5'-cyclic-AMP phosphodiesterase 4D from Homo sapiens (Human).